A 226-amino-acid polypeptide reads, in one-letter code: Ornithine decarboxylase antizyme (226 aa).

This sequence belongs to the ODC antizyme family. Interacts with ODC and thereby sterically blocks ODC homodimerization.

Its function is as follows. Ornithine decarboxylase (ODC) antizyme protein that negatively regulates ODC activity and intracellular polyamine biosynthesis in response to increased intracellular polyamine levels. Binds to ODC monomers, inhibiting the assembly of the functional ODC homodimer, and targets the monomers for ubiquitin-independent proteolytic destruction by the 26S proteasome. This chain is Ornithine decarboxylase antizyme (spa1), found in Schizosaccharomyces japonicus (Fission yeast).